A 563-amino-acid polypeptide reads, in one-letter code: Formate--tetrahydrofolate ligase (563 aa).

65–72 (TPLGEGKT) provides a ligand contact to ATP.

This sequence belongs to the formate--tetrahydrofolate ligase family.

It carries out the reaction (6S)-5,6,7,8-tetrahydrofolate + formate + ATP = (6R)-10-formyltetrahydrofolate + ADP + phosphate. The protein operates within one-carbon metabolism; tetrahydrofolate interconversion. This Cutibacterium acnes (strain DSM 16379 / KPA171202) (Propionibacterium acnes) protein is Formate--tetrahydrofolate ligase.